The primary structure comprises 590 residues: Mannosyl-oligosaccharide 1,2-alpha-mannosidase mans-2 (590 aa).

The Cytoplasmic segment spans residues 1-9; the sequence is MKTVRFNKQ. A helical; Signal-anchor for type II membrane protein transmembrane segment spans residues 10–30; that stretch reads ALAILAACFIFLLCVVCYFSA. Residues 31 to 590 lie on the Lumenal side of the membrane; that stretch reads SSESHNAVVV…EAHPVPVLTN (560 aa). Basic and acidic residues predominate over residues 88–102; it reads PARVESKPPGEKTST. Residues 88–112 are disordered; sequence PARVESKPPGEKTSTEPEETGVGKA. N156, N212, N373, and N402 each carry an N-linked (GlcNAc...) asparagine glycan. The cysteines at positions 423 and 456 are disulfide-linked. Residue E470 is the Proton donor of the active site. Position 580 (T580) interacts with Ca(2+).

The protein belongs to the glycosyl hydrolase 47 family. Ca(2+) is required as a cofactor.

The protein resides in the membrane. The enzyme catalyses N(4)-(alpha-D-Man-(1-&gt;2)-alpha-D-Man-(1-&gt;2)-alpha-D-Man-(1-&gt;3)-[alpha-D-Man-(1-&gt;2)-alpha-D-Man-(1-&gt;3)-[alpha-D-Man-(1-&gt;2)-alpha-D-Man-(1-&gt;6)]-alpha-D-Man-(1-&gt;6)]-beta-D-Man-(1-&gt;4)-beta-D-GlcNAc-(1-&gt;4)-beta-D-GlcNAc)-L-asparaginyl-[protein] (N-glucan mannose isomer 9A1,2,3B1,2,3) + 4 H2O = N(4)-(alpha-D-Man-(1-&gt;3)-[alpha-D-Man-(1-&gt;3)-[alpha-D-Man-(1-&gt;6)]-alpha-D-Man-(1-&gt;6)]-beta-D-Man-(1-&gt;4)-beta-D-GlcNAc-(1-&gt;4)-beta-D-GlcNAc)-L-asparaginyl-[protein] (N-glucan mannose isomer 5A1,2) + 4 beta-D-mannose. It carries out the reaction N(4)-(alpha-D-Man-(1-&gt;2)-alpha-D-Man-(1-&gt;2)-alpha-D-Man-(1-&gt;3)-[alpha-D-Man-(1-&gt;3)-[alpha-D-Man-(1-&gt;2)-alpha-D-Man-(1-&gt;6)]-alpha-D-Man-(1-&gt;6)]-beta-D-Man-(1-&gt;4)-beta-D-GlcNAc-(1-&gt;4)-beta-D-GlcNAc)-L-asparaginyl-[protein] (N-glucan mannose isomer 8A1,2,3B1,3) + 3 H2O = N(4)-(alpha-D-Man-(1-&gt;3)-[alpha-D-Man-(1-&gt;3)-[alpha-D-Man-(1-&gt;6)]-alpha-D-Man-(1-&gt;6)]-beta-D-Man-(1-&gt;4)-beta-D-GlcNAc-(1-&gt;4)-beta-D-GlcNAc)-L-asparaginyl-[protein] (N-glucan mannose isomer 5A1,2) + 3 beta-D-mannose. Its pathway is protein modification; protein glycosylation. Functionally, involved in the maturation of Asn-linked oligosaccharides. Progressively trim alpha-1,2-linked mannose residues from Man(9)GlcNAc(2) to produce Man(5)GlcNAc(2). The protein is Mannosyl-oligosaccharide 1,2-alpha-mannosidase mans-2 of Caenorhabditis elegans.